We begin with the raw amino-acid sequence, 294 residues long: Cytidine deaminase (294 aa).

CMP/dCMP-type deaminase domains are found at residues 48–168 and 187–294; these read NDDE…FGPK and DNTS…RVTL. 89 to 91 is a binding site for substrate; sequence NME. His-102 lines the Zn(2+) pocket. Glu-104 serves as the catalytic Proton donor. Zn(2+) is bound by residues Cys-129 and Cys-132.

Belongs to the cytidine and deoxycytidylate deaminase family. As to quaternary structure, homodimer. Requires Zn(2+) as cofactor.

The enzyme catalyses cytidine + H2O + H(+) = uridine + NH4(+). The catalysed reaction is 2'-deoxycytidine + H2O + H(+) = 2'-deoxyuridine + NH4(+). In terms of biological role, this enzyme scavenges exogenous and endogenous cytidine and 2'-deoxycytidine for UMP synthesis. The sequence is that of Cytidine deaminase from Proteus mirabilis (strain HI4320).